The primary structure comprises 257 residues: Phosphate import ATP-binding protein PstB (257 aa).

An ABC transporter domain is found at 4-246 (LKLNDVNIYY…KKIFENPDQK (243 aa)). 36–43 (GPSGCGKS) contributes to the ATP binding site.

The protein belongs to the ABC transporter superfamily. Phosphate importer (TC 3.A.1.7) family. In terms of assembly, the complex is composed of two ATP-binding proteins (PstB), two transmembrane proteins (PstC and PstA) and a solute-binding protein (PstS).

Its subcellular location is the cell membrane. It catalyses the reaction phosphate(out) + ATP + H2O = ADP + 2 phosphate(in) + H(+). Functionally, part of the ABC transporter complex PstSACB involved in phosphate import. Responsible for energy coupling to the transport system. The polypeptide is Phosphate import ATP-binding protein PstB (Corynebacterium glutamicum (strain ATCC 13032 / DSM 20300 / JCM 1318 / BCRC 11384 / CCUG 27702 / LMG 3730 / NBRC 12168 / NCIMB 10025 / NRRL B-2784 / 534)).